We begin with the raw amino-acid sequence, 462 residues long: tRNA-2-methylthio-N(6)-dimethylallyladenosine synthase (462 aa).

An MTTase N-terminal domain is found at 2–117; sequence KRYFIHTFGC…LPDIIGRVSA (116 aa). 6 residues coordinate [4Fe-4S] cluster: Cys11, Cys47, Cys80, Cys157, Cys161, and Cys164. The region spanning 143–372 is the Radical SAM core domain; the sequence is SRGKVTEFVT…QKLQRRISGE (230 aa). In terms of domain architecture, TRAM spans 375–437; the sequence is AALVGSEVEV…PNQLAGKQVA (63 aa).

This sequence belongs to the methylthiotransferase family. MiaB subfamily. Monomer. It depends on [4Fe-4S] cluster as a cofactor.

It localises to the cytoplasm. The catalysed reaction is N(6)-dimethylallyladenosine(37) in tRNA + (sulfur carrier)-SH + AH2 + 2 S-adenosyl-L-methionine = 2-methylsulfanyl-N(6)-dimethylallyladenosine(37) in tRNA + (sulfur carrier)-H + 5'-deoxyadenosine + L-methionine + A + S-adenosyl-L-homocysteine + 2 H(+). Catalyzes the methylthiolation of N6-(dimethylallyl)adenosine (i(6)A), leading to the formation of 2-methylthio-N6-(dimethylallyl)adenosine (ms(2)i(6)A) at position 37 in tRNAs that read codons beginning with uridine. The sequence is that of tRNA-2-methylthio-N(6)-dimethylallyladenosine synthase from Myxococcus xanthus (strain DK1622).